The following is a 317-amino-acid chain: MAELACFCYPHLENDSYKFIPFNNLAIKCMLTAKVEKKDQDKFYNSIVYGIAPPPQFKKRYNTSDNSRGMNYETIMFNKVAVLICEALNSIKITQSDVANVLSRVVSVRHLENLVLRKENHQDVLFHSKELLLKSVLIAIGQSKEIETTATAEGGEIVFQNAAFTMWKLTYLDHKLMPILDQNFIEYKITLNEDKPISDVCIKELVAELRWQYNRFAVITHGKGHYRVVKYSSVANHADRVFATYKNSAKSGNVIDFNLLDQRIIWQNWYAFTSSMKQGNTLDVCKKLLFQKMKQEKNPFKGLSTDRKMDEVSHVGI.

ATP is bound by residues 107–109, lysine 188, and 221–223; these read SVR and HGK. The RNA-binding stretch occupies residues 205–241; that stretch reads LVAELRWQYNRFAVITHGKGHYRVVKYSSVANHADRV. Histidine 225 acts as the For NTPase and RTPase activities in catalysis. Arginine 227 is a binding site for ATP.

The protein belongs to the rotavirus NSP2 family. In terms of assembly, homooctamer. Interacts with VP1; this interaction is weak. Interacts with NSP5; this interaction leads to up-regulation of NSP5 phosphorylation and formation of viral factories. Interacts with host DCP1A, DCP1B, DDX6, EDC4 and EIF2S1/eIF2-alpha; these interactions are probably part of the sequestration of some host SGs and PBs proteins in viral factories. Requires Mg(2+) as cofactor.

It localises to the host cytoplasm. In terms of biological role, participates in replication and packaging of the viral genome. Plays a crucial role, together with NSP5, in the formation of virus factories (viroplasms), which are large inclusions in the host cytoplasm where replication intermediates are assembled and viral RNA replication takes place. Displays ssRNA binding, NTPase, RNA triphosphatase (RTPase) and ATP-independent helix-unwinding activities. The unwinding activity may prepare and organize plus-strand RNAs for packaging and replication by removing interfering secondary structures. The RTPase activity plays a role in the removal of the gamma-phosphate from the rotavirus RNA minus strands of dsRNA genome segments. Participates in the selective exclusion of host proteins from stress granules (SG) and P bodies (PB). Also participates in the sequestration of these remodeled organelles in viral factories. This is Non-structural protein 2 from Rotavirus A (strain RVA/Human/United States/Wa/1974/G1P1A[8]) (RV-A).